The sequence spans 447 residues: GTPase Der (447 aa).

EngA-type G domains lie at lysine 4 to glutamate 165 and leucine 180 to asparagine 357. GTP contacts are provided by residues glycine 10–serine 17, aspartate 57–leucine 61, asparagine 119–glutamate 122, glycine 186–serine 193, aspartate 233–leucine 237, and asparagine 298–aspartate 301. Positions lysine 358–lysine 443 constitute a KH-like domain.

The protein belongs to the TRAFAC class TrmE-Era-EngA-EngB-Septin-like GTPase superfamily. EngA (Der) GTPase family. As to quaternary structure, associates with the 50S ribosomal subunit.

Its function is as follows. GTPase that plays an essential role in the late steps of ribosome biogenesis. The protein is GTPase Der of Rickettsia typhi (strain ATCC VR-144 / Wilmington).